A 150-amino-acid polypeptide reads, in one-letter code: Deoxyuridine 5'-triphosphate nucleotidohydrolase (150 aa).

Residues 70–72 (RSG), asparagine 82, 86–88 (LID), and methionine 96 contribute to the substrate site.

Belongs to the dUTPase family. The cofactor is Mg(2+).

The enzyme catalyses dUTP + H2O = dUMP + diphosphate + H(+). Its pathway is pyrimidine metabolism; dUMP biosynthesis; dUMP from dCTP (dUTP route): step 2/2. Its function is as follows. This enzyme is involved in nucleotide metabolism: it produces dUMP, the immediate precursor of thymidine nucleotides and it decreases the intracellular concentration of dUTP so that uracil cannot be incorporated into DNA. The sequence is that of Deoxyuridine 5'-triphosphate nucleotidohydrolase from Baumannia cicadellinicola subsp. Homalodisca coagulata.